The sequence spans 480 residues: Glutamate--tRNA ligase (480 aa).

A 'HIGH' region motif is present at residues 21 to 31 (PSPTGYLHVGG). C110, C112, C137, and H139 together coordinate Zn(2+). A 'KMSKS' region motif is present at residues 248–252 (KLSKR). Position 251 (K251) interacts with ATP.

The protein belongs to the class-I aminoacyl-tRNA synthetase family. Glutamate--tRNA ligase type 1 subfamily. As to quaternary structure, monomer. The cofactor is Zn(2+).

It localises to the cytoplasm. The catalysed reaction is tRNA(Glu) + L-glutamate + ATP = L-glutamyl-tRNA(Glu) + AMP + diphosphate. Its function is as follows. Catalyzes the attachment of glutamate to tRNA(Glu) in a two-step reaction: glutamate is first activated by ATP to form Glu-AMP and then transferred to the acceptor end of tRNA(Glu). The polypeptide is Glutamate--tRNA ligase (Mannheimia succiniciproducens (strain KCTC 0769BP / MBEL55E)).